The sequence spans 45 residues: Large ribosomal subunit protein bL34 (45 aa).

The protein belongs to the bacterial ribosomal protein bL34 family.

This is Large ribosomal subunit protein bL34 from Frankia casuarinae (strain DSM 45818 / CECT 9043 / HFP020203 / CcI3).